The sequence spans 655 residues: A-type voltage-gated potassium channel KCND3 (655 aa).

Over 1 to 182 the chain is Cytoplasmic; that stretch reads MAAGVAAWLP…FENPHTSTLA (182 aa). The tract at residues 6–21 is interaction with KCNIP1 and KCNIP2; it reads AAWLPFARAAAIGWMP. The tract at residues 70–78 is interaction with KCNIP1; it reads EKEFFFNED. 4 residues coordinate Zn(2+): H104, C110, C131, and C132. Phosphoserine is present on S153. Residues 183–204 traverse the membrane as a helical segment; sequence LVFYYVTGFFIAVSVITNVVET. Residues 205–223 are Extracellular-facing; sequence VPCGTVPGSKELPCGERYS. A helical membrane pass occupies residues 224–246; sequence VAFFCLDTACVMIFTVEYLLRLF. Residues 247–253 lie on the Cytoplasmic side of the membrane; it reads AAPSRYR. A helical transmembrane segment spans residues 254 to 277; sequence FIRSVMSIIDVVAIMPYYIGLVMT. Residues 278 to 283 are Extracellular-facing; it reads NNEDVS. A helical; Voltage-sensor transmembrane segment spans residues 284–306; sequence GAFVTLRVFRVFRIFKFSRHSQG. Topologically, residues 307–318 are cytoplasmic; that stretch reads LRILGYTLKSCA. Residues 319-343 traverse the membrane as a helical segment; sequence SELGFLLFSLTMAIIIFATVMFYAE. The Extracellular segment spans residues 344–352; it reads KGSSASKFT. Residues 353–366 constitute an intramembrane region (helical); that stretch reads SIPASFWYTIVTMT. Residues T367, L368, G369, and Y370 each contribute to the K(+) site. Positions 367 to 372 match the Selectivity filter motif; that stretch reads TLGYGD. An intramembrane segment occupies 367–374; sequence TLGYGDMV. A helical transmembrane segment spans residues 378 to 400; it reads IAGKIFGSICSLSGVLVIALPVP. Over 401–655 the chain is Cytoplasmic; that stretch reads VIVSNFSRIY…TSNVVKVSAL (255 aa). T459 is subject to Phosphothreonine. Residues 470 to 487 are interaction with KCNIP1 and KCNIP2; the sequence is SLIESQHHHLLHCLEKTT. The mediates dendritic targeting stretch occupies residues 472-487; sequence IESQHHHLLHCLEKTT. The interval 523–565 is disordered; the sequence is SSMQNYPSTRSPSLSSHSGLTTTCCSRRSKKTTHLPNSNLPAT. Over residues 529–548 the composition is skewed to low complexity; the sequence is PSTRSPSLSSHSGLTTTCCS. Phosphoserine is present on residues S569 and S585. The segment at 615–655 is disordered; the sequence is ISIPTPPALTPEGESRPPPASPGPNTNIPSITSNVVKVSAL. Residues 637–655 show a composition bias toward polar residues; sequence GPNTNIPSITSNVVKVSAL.

It belongs to the potassium channel family. D (Shal) (TC 1.A.1.2) subfamily. Kv4.3/KCND3 sub-subfamily. Homotetramer. Heterotetramer with KCND2. Associates with the regulatory subunit KCNIP3. Associates with the regulatory subunit KCNIP4. Interacts with KCNE1, KCNE2, SCN1B and KCNAB1 and DLG1. Component of heteromultimeric potassium channels. Identified in potassium channel complexes containing KCND1, KCND2, KCND3, KCNIP1, KCNIP2, KCNIP3, KCNIP4, DPP6 and DPP10. Interacts with KCNIP1; each KCNIP1 monomer interacts with two adjacent KCND3 subunits, through both the N-terminal inactivation ball of a KCND3 subunit and a C-terminal helix from the adjacent KCND3 subunit, clamping them together; this interaction stabilizes the tetrameric form and modulates the channel gating kinetics namely channel activation and inactivation kinetics and rate of recovery from inactivation. Interacts with DPP6; this interaction modulates the channel gating kinetics namely channel activation and inactivation kinetics and rate of recovery from inactivation. Interacts with KCNIP2; each KCNIP2 monomer interacts with two adjacent KCND3 subunits, through both the N-terminal inactivation ball of a KCND3 subunit and a C-terminal helix from the adjacent KCND3 subunit, clamping them together; this interaction modulates the channel gating kinetics. Post-translationally, regulated through phosphorylation at Ser-569 by CaMK2D.

Its subcellular location is the cell membrane. It localises to the sarcolemma. The protein resides in the cell projection. It is found in the dendrite. The enzyme catalyses K(+)(in) = K(+)(out). Its function is as follows. Pore-forming (alpha) subunit of voltage-gated A-type potassium channels that mediates transmembrane potassium transport in excitable membranes, in brain and heart. In cardiomyocytes, may generate the transient outward potassium current I(To). In neurons, may conduct the transient subthreshold somatodendritic A-type potassium current (ISA). Kinetics properties are characterized by fast activation at subthreshold membrane potentials, rapid inactivation, and quick recovery from inactivation. Channel properties are modulated by interactions with regulatory subunits. Interaction with the regulatory subunits KCNIP1 or KCNIP2 modulates the channel gating kinetics namely channel activation and inactivation kinetics and rate of recovery from inactivation. Likewise, interaction with DPP6 modulates the channel gating kinetics namely channel activation and inactivation kinetics. The chain is A-type voltage-gated potassium channel KCND3 from Mus musculus (Mouse).